The primary structure comprises 447 residues: Phosphoglucosamine mutase (447 aa).

The active-site Phosphoserine intermediate is the S102. 4 residues coordinate Mg(2+): S102, D241, D243, and D245. S102 carries the post-translational modification Phosphoserine.

It belongs to the phosphohexose mutase family. Requires Mg(2+) as cofactor. Post-translationally, activated by phosphorylation.

The enzyme catalyses alpha-D-glucosamine 1-phosphate = D-glucosamine 6-phosphate. In terms of biological role, catalyzes the conversion of glucosamine-6-phosphate to glucosamine-1-phosphate. This Pseudomonas syringae pv. tomato (strain ATCC BAA-871 / DC3000) protein is Phosphoglucosamine mutase.